An 87-amino-acid polypeptide reads, in one-letter code: Toxin Cll5b (87 aa).

Residues 1–19 (MNSLLMITACLAEIGTVWA) form the signal peptide. The LCN-type CS-alpha/beta domain maps to 20 to 85 (KEGYLVNKST…TYPLPNKSCS (66 aa)). Cystine bridges form between C31/C84, C35/C60, C44/C65, and C48/C67. Positions 86-87 (KK) are cleaved as a propeptide — removed by a carboxypeptidase.

Belongs to the long (4 C-C) scorpion toxin superfamily. Sodium channel inhibitor family. Beta subfamily. Expressed by the venom gland.

The protein localises to the secreted. Functionally, beta toxins bind voltage-independently at site-4 of sodium channels (Nav) and shift the voltage of activation toward more negative potentials thereby affecting sodium channel activation and promoting spontaneous and repetitive firing. This is Toxin Cll5b from Centruroides limpidus (Mexican scorpion).